The primary structure comprises 582 residues: TRAF-type zinc finger domain-containing protein 1 (582 aa).

An N-acetylalanine modification is found at alanine 2. The TRAF-type zinc finger occupies 27-103 (IHEIHCQRNI…DLELSILKLK (77 aa)). Residue serine 191 is modified to Phosphoserine. The disordered stretch occupies residues 216–238 (EEQERQERNRGQQPPKEGGEDGA). Serine 278, serine 320, serine 326, serine 327, serine 409, serine 415, serine 430, and serine 470 each carry phosphoserine. 2 disordered regions span residues 402 to 509 (EGIP…IAPG) and 522 to 582 (PENI…EEEE). Polar residues-rich tracts occupy residues 454–471 (PFNNMTATYNQLSRSTSG) and 486–504 (LNNSDSQDIQGRNQNSQNG).

In terms of assembly, interacts with MAVS, TICAM1, TRAF1, TRAF2, TRAF3 and TRAF6.

Negative feedback regulator that controls excessive innate immune responses. Regulates both Toll-like receptor 4 (TLR4) and DDX58/RIG1-like helicases (RLH) pathways. May inhibit the LTR pathway by direct interaction with TRAF6 and attenuation of NF-kappa-B activation. May negatively regulate the RLH pathway downstream from MAVS and upstream of NF-kappa-B and IRF3. In Macaca fascicularis (Crab-eating macaque), this protein is TRAF-type zinc finger domain-containing protein 1 (TRAFD1).